We begin with the raw amino-acid sequence, 239 residues long: 1-(5-phosphoribosyl)-5-[(5-phosphoribosylamino)methylideneamino] imidazole-4-carboxamide isomerase (239 aa).

D8 serves as the catalytic Proton acceptor. The active-site Proton donor is the D129.

Belongs to the HisA/HisF family.

Its subcellular location is the cytoplasm. The enzyme catalyses 1-(5-phospho-beta-D-ribosyl)-5-[(5-phospho-beta-D-ribosylamino)methylideneamino]imidazole-4-carboxamide = 5-[(5-phospho-1-deoxy-D-ribulos-1-ylimino)methylamino]-1-(5-phospho-beta-D-ribosyl)imidazole-4-carboxamide. It functions in the pathway amino-acid biosynthesis; L-histidine biosynthesis; L-histidine from 5-phospho-alpha-D-ribose 1-diphosphate: step 4/9. In Bacillus cereus (strain ATCC 10987 / NRS 248), this protein is 1-(5-phosphoribosyl)-5-[(5-phosphoribosylamino)methylideneamino] imidazole-4-carboxamide isomerase.